The following is a 309-amino-acid chain: Protein FdhE (309 aa).

This sequence belongs to the FdhE family.

It is found in the cytoplasm. Functionally, necessary for formate dehydrogenase activity. This chain is Protein FdhE, found in Salmonella arizonae (strain ATCC BAA-731 / CDC346-86 / RSK2980).